The sequence spans 272 residues: 3-methyl-2-oxobutanoate hydroxymethyltransferase (272 aa).

Residues Asp52 and Asp91 each coordinate Mg(2+). Residues 52 to 53, Asp91, and Lys121 contribute to the 3-methyl-2-oxobutanoate site; that span reads DS. Residue Glu123 coordinates Mg(2+). The active-site Proton acceptor is the Glu190.

This sequence belongs to the PanB family. In terms of assembly, homodecamer; pentamer of dimers. Requires Mg(2+) as cofactor.

It localises to the cytoplasm. It carries out the reaction 3-methyl-2-oxobutanoate + (6R)-5,10-methylene-5,6,7,8-tetrahydrofolate + H2O = 2-dehydropantoate + (6S)-5,6,7,8-tetrahydrofolate. The protein operates within cofactor biosynthesis; (R)-pantothenate biosynthesis; (R)-pantoate from 3-methyl-2-oxobutanoate: step 1/2. Its function is as follows. Catalyzes the reversible reaction in which hydroxymethyl group from 5,10-methylenetetrahydrofolate is transferred onto alpha-ketoisovalerate to form ketopantoate. The chain is 3-methyl-2-oxobutanoate hydroxymethyltransferase from Christiangramia forsetii (strain DSM 17595 / CGMCC 1.15422 / KT0803) (Gramella forsetii).